A 485-amino-acid polypeptide reads, in one-letter code: GTPase Der (485 aa).

2 EngA-type G domains span residues 3 to 167 (PTIA…PEPE) and 176 to 349 (PVFA…NAAM). Residues 9-16 (GRPNVGKS), 56-60 (DTGGF), 119-122 (NKGE), 182-189 (GRPNVGKS), 229-233 (DTAGV), and 294-297 (NKWD) each bind GTP. Residues 350 to 434 (IKMPTPKITR…PLRIQYNVSE (85 aa)) enclose the KH-like domain. Residues 435 to 485 (NPYENAEDKPKKKPLRRVSLSNRIEKREGRKEEKNRFKKKTKVSVKKQFSK) form a disordered region. Positions 457-469 (RIEKREGRKEEKN) are enriched in basic and acidic residues. Over residues 470–485 (RFKKKTKVSVKKQFSK) the composition is skewed to basic residues.

The protein belongs to the TRAFAC class TrmE-Era-EngA-EngB-Septin-like GTPase superfamily. EngA (Der) GTPase family. Associates with the 50S ribosomal subunit.

GTPase that plays an essential role in the late steps of ribosome biogenesis. This chain is GTPase Der, found in Neisseria meningitidis serogroup C / serotype 2a (strain ATCC 700532 / DSM 15464 / FAM18).